Consider the following 263-residue polypeptide: tRNA pseudouridine synthase A (263 aa).

The active-site Nucleophile is aspartate 73. Position 131 (tyrosine 131) interacts with substrate.

This sequence belongs to the tRNA pseudouridine synthase TruA family. In terms of assembly, homodimer.

It carries out the reaction uridine(38/39/40) in tRNA = pseudouridine(38/39/40) in tRNA. In terms of biological role, formation of pseudouridine at positions 38, 39 and 40 in the anticodon stem and loop of transfer RNAs. This chain is tRNA pseudouridine synthase A, found in Mycoplasmoides gallisepticum (strain R(low / passage 15 / clone 2)) (Mycoplasma gallisepticum).